A 176-amino-acid chain; its full sequence is Adenine phosphoribosyltransferase (176 aa).

The protein belongs to the purine/pyrimidine phosphoribosyltransferase family. As to quaternary structure, homodimer.

It localises to the cytoplasm. It carries out the reaction AMP + diphosphate = 5-phospho-alpha-D-ribose 1-diphosphate + adenine. The protein operates within purine metabolism; AMP biosynthesis via salvage pathway; AMP from adenine: step 1/1. Its function is as follows. Catalyzes a salvage reaction resulting in the formation of AMP, that is energically less costly than de novo synthesis. The chain is Adenine phosphoribosyltransferase from Roseobacter denitrificans (strain ATCC 33942 / OCh 114) (Erythrobacter sp. (strain OCh 114)).